The chain runs to 200 residues: dITP/XTP pyrophosphatase (200 aa).

8–13 (SQNSSK) contacts substrate. Mg(2+)-binding residues include E40 and D69. D69 functions as the Proton acceptor in the catalytic mechanism. Substrate-binding positions include S70, 154–157 (FGYD), K177, and 182–183 (HR).

Belongs to the HAM1 NTPase family. Homodimer. Mg(2+) serves as cofactor.

The enzyme catalyses XTP + H2O = XMP + diphosphate + H(+). It catalyses the reaction dITP + H2O = dIMP + diphosphate + H(+). The catalysed reaction is ITP + H2O = IMP + diphosphate + H(+). In terms of biological role, pyrophosphatase that catalyzes the hydrolysis of nucleoside triphosphates to their monophosphate derivatives, with a high preference for the non-canonical purine nucleotides XTP (xanthosine triphosphate), dITP (deoxyinosine triphosphate) and ITP. Seems to function as a house-cleaning enzyme that removes non-canonical purine nucleotides from the nucleotide pool, thus preventing their incorporation into DNA/RNA and avoiding chromosomal lesions. This Coxiella burnetii (strain RSA 493 / Nine Mile phase I) protein is dITP/XTP pyrophosphatase.